We begin with the raw amino-acid sequence, 357 residues long: Dihydroorotate dehydrogenase (quinone) (357 aa).

FMN contacts are provided by residues 66 to 70 and Thr-90; that span reads AGFDK. Lys-70 is a substrate binding site. 115–119 provides a ligand contact to substrate; that stretch reads NRMGF. FMN contacts are provided by Asn-143 and Asn-176. Asn-176 contributes to the substrate binding site. Catalysis depends on Ser-179, which acts as the Nucleophile. Asn-181 serves as a coordination point for substrate. Residues Lys-212 and Thr-240 each contribute to the FMN site. 241–242 provides a ligand contact to substrate; it reads NT. FMN contacts are provided by residues Gly-264, Gly-293, and 314 to 315; that span reads YT.

This sequence belongs to the dihydroorotate dehydrogenase family. Type 2 subfamily. In terms of assembly, monomer. FMN serves as cofactor.

The protein resides in the cell membrane. The enzyme catalyses (S)-dihydroorotate + a quinone = orotate + a quinol. Its pathway is pyrimidine metabolism; UMP biosynthesis via de novo pathway; orotate from (S)-dihydroorotate (quinone route): step 1/1. Its function is as follows. Catalyzes the conversion of dihydroorotate to orotate with quinone as electron acceptor. The sequence is that of Dihydroorotate dehydrogenase (quinone) from Mycobacterium tuberculosis (strain ATCC 25177 / H37Ra).